Reading from the N-terminus, the 355-residue chain is Cobalt-precorrin-5B C(1)-methyltransferase (355 aa).

Belongs to the CbiD family.

It carries out the reaction Co-precorrin-5B + S-adenosyl-L-methionine = Co-precorrin-6A + S-adenosyl-L-homocysteine. It participates in cofactor biosynthesis; adenosylcobalamin biosynthesis; cob(II)yrinate a,c-diamide from sirohydrochlorin (anaerobic route): step 6/10. In terms of biological role, catalyzes the methylation of C-1 in cobalt-precorrin-5B to form cobalt-precorrin-6A. The polypeptide is Cobalt-precorrin-5B C(1)-methyltransferase (Sulfolobus acidocaldarius (strain ATCC 33909 / DSM 639 / JCM 8929 / NBRC 15157 / NCIMB 11770)).